Here is a 179-residue protein sequence, read N- to C-terminus: Ribosome maturation factor RimP (179 aa).

It belongs to the RimP family.

It localises to the cytoplasm. Required for maturation of 30S ribosomal subunits. The polypeptide is Ribosome maturation factor RimP (Prosthecochloris aestuarii (strain DSM 271 / SK 413)).